The sequence spans 1024 residues: Unconventional myosin-Ig (1024 aa).

Residues 15–713 (YGKPDFVLLD…TLVTLEQSRA (699 aa)) form the Myosin motor domain. ATP is bound at residue 108 to 115 (GESGAGKT). The interval 590–612 (MVALVENLASKEPFYVRCIKPNE) is actin-binding. One can recognise an IQ domain in the interval 716 to 745 (IPIIVLLLQKAWRGTLARWHCRRLRAIYTI). The region spanning 830-1023 (GLRQDWGCQR…RSTFTLLWPS (194 aa)) is the TH1 domain. The tract at residues 999 to 1024 (VEPRPEQPEPDFQSSRSTFTLLWPSH) is disordered.

This sequence belongs to the TRAFAC class myosin-kinesin ATPase superfamily. Myosin family. In terms of assembly, interacts with calmodulin; via its IQ motifs. In terms of tissue distribution, specifically expressed in hematopoietic cells. Detected in adult tissues of the immune system such as thymus, lymph nodes and spleen, but not in brain, lung, heart, liver, small intestine, testis and kidney (at protein level). Highly expressed in T-lymphocytes; constitutes the most highly expressed class I myosin in naive CD4 and CD8 T-cells. Also present in B-lymphocytes.

The protein resides in the cell membrane. Its subcellular location is the cell projection. It is found in the phagocytic cup. Functionally, unconventional myosin required during immune response for detection of rare antigen-presenting cells by regulating T-cell migration. Unconventional myosins are actin-based motor molecules with ATPase activity and serve in intracellular movements. Acts as a regulator of T-cell migration by generating membrane tension, enforcing cell-intrinsic meandering search, thereby enhancing detection of rare antigens during lymph-node surveillance, enabling pathogen eradication. Also required in B-cells, where it regulates different membrane/cytoskeleton-dependent processes. Involved in Fc-gamma receptor (Fc-gamma-R) phagocytosis. This chain is Unconventional myosin-Ig (Myo1g), found in Mus musculus (Mouse).